The sequence spans 215 residues: High mobility group protein B1 (215 aa).

1–10 (MGKGDPKKPR) lines the heparin pocket. Residues 1 to 97 (MGKGDPKKPR…KFKDPNAPKR (97 aa)) are sufficient for interaction with HAVCR2. N6-acetyllysine occurs at positions 3, 7, 8, and 12. Residues 3 to 15 (KGDPKKPRGKMSS) are LPS binding (delipidated). The segment at residues 9-79 (PRGKMSSYAF…RYEREMKTYI (71 aa)) is a DNA-binding region (HMG box 1). Cys-23 is subject to Cysteine sulfonic acid (-SO3H); alternate. A disulfide bond links Cys-23 and Cys-45. Positions 27-43 (HKKKHPDASVNFSEFSK) are NLS 1. The Nuclear localization signal (NLS) 1 motif lies at 27–43 (HKKKHPDASVNFSEFSK). N6-acetyllysine is present on residues Lys-28, Lys-29, and Lys-30. An Isoglutamyl lysine isopeptide (Lys-Gln) (interchain with Q-?) cross-link involves residue Lys-28. Ser-35 bears the Phosphoserine mark. Position 43 is an N6-acetyllysine (Lys-43). Residues Lys-43 and Lys-44 each participate in an isoglutamyl lysine isopeptide (Lys-Gln) (interchain with Q-?) cross-link. At Cys-45 the chain carries Cysteine sulfonic acid (-SO3H); alternate. Lys-68 participates in a covalent cross-link: Isoglutamyl lysine isopeptide (Lys-Gln) (interchain with Q-?). A disordered region spans residues 76-95 (KTYIPPKGETKKKFKDPNAP). Residues 80–96 (PPKGETKKKFKDPNAPK) form an LPS binding (Lipid A) region. Over residues 83–94 (GETKKKFKDPNA) the composition is skewed to basic and acidic residues. The cytokine-stimulating activity stretch occupies residues 89–108 (FKDPNAPKRPPSAFFLFCSE). Lys-90 is subject to N6-acetyllysine. The segment at residues 95–163 (PKRPPSAFFL…KYEKDIAAYR (69 aa)) is a DNA-binding region (HMG box 2). Ser-100 is subject to Phosphoserine. Position 106 is a cysteine sulfonic acid (-SO3H) (Cys-106). Lys-127, Lys-128, Lys-141, Lys-172, Lys-173, Lys-177, and Lys-180 each carry N6-acetyllysine. A binding to AGER/RAGE region spans residues 150–183 (KLKEKYEKDIAAYRAKGKPDAAKKGVVKAEKSKK). Over residues 161–179 (AYRAKGKPDAAKKGVVKAE) the composition is skewed to basic and acidic residues. A disordered region spans residues 161 to 215 (AYRAKGKPDAAKKGVVKAEKSKKKKEEEDDEEDEEDEEEEEEEEDEDEEEDDDDE). Residues 178–184 (AEKSKKK) are NLS 2. Positions 178-184 (AEKSKKK) match the Nuclear localization signal (NLS) 2 motif. An Isoglutamyl lysine isopeptide (Lys-Gln) (interchain with Q-?) cross-link involves residue Lys-180. Ser-181 carries the post-translational modification ADP-ribosylserine. Residues Lys-182, Lys-183, Lys-184, and Lys-185 each carry the N6-acetyllysine modification. Residues Lys-182, Lys-183, and Lys-184 each participate in an isoglutamyl lysine isopeptide (Lys-Gln) (interchain with Q-?) cross-link. Residues 187–215 (EEDDEEDEEDEEEEEEEEDEDEEEDDDDE) are compositionally biased toward acidic residues.

The protein belongs to the HMGB family. As to quaternary structure, interacts (fully reduced HMGB1) with CXCL12; probably in a 1:2 ratio involving two molecules of CXCL12, each interacting with one HMG box of HMGB1; inhibited by glycyrrhizin. Associates with the TLR4:LY96 receptor complex. Component of the RAG complex composed of core components RAG1 and RAG2, and associated component HMGB1 or HMGB2. Interacts (in cytoplasm upon starvation) with BECN1; inhibits the interaction of BECN1 and BCL2 leading to promotion of autophagy. Interacts with KPNA1; involved in nuclear import. Interacts with SREBF1, TLR2, TLR4, TLR9, APEX1, FEN1, POLB, TERT. Interacts with AGER, PTPRZ1, IL1B, MSH2, XPA, XPC, HNF1A, TP53. Interacts with CD24; the probable CD24:SIGLEC10 complex is proposed to inhibit HGMB1-mediated tissue damage immune response. Interacts with THBD; prevents HGMB1 interaction with ACER/RAGE and inhibits HGMB1 pro-inflammatory activity. Interacts with HAVCR2; impairs HMGB1 binding to B-DNA and likely HMGB1-mediated innate immune response. Interacts with XPO1; mediating nuclear export. Interacts with receptor RAGE/AGER. Post-translationally, acetylated on multiple sites upon stimulation with LPS. Acetylation on lysine residues in the nuclear localization signals (NLS 1 and NLS 2) leads to cytoplasmic localization and subsequent secretion. Acetylation on Lys-3 results in preferential binding to DNA ends and impairs DNA bending activity. Phosphorylated at serine residues. Phosphorylation in both NLS regions is required for cytoplasmic translocation followed by secretion. In terms of processing, reduction/oxidation of cysteine residues Cys-23, Cys-45 and Cys-106 and a possible intramolecular disulfide bond involving Cys-23 and Cys-45 give rise to different redox forms with specific functional activities in various cellular compartments: 1- Fully reduced HGMB1 (HMGB1C23hC45hC106h), 2- Disulfide HMGB1 (HMGB1C23-C45C106h) and 3- Sulfonyl HMGB1 (HMGB1C23soC45soC106so). Post-translationally, poly-ADP-ribosylated by PARP1 when secreted following stimulation with LPS. In vitro cleavage by CASP1 is liberating a HMG box 1-containing peptide which may mediate immunogenic activity; the peptide antagonizes apoptosis-induced immune tolerance. Can be proteolytically cleaved by a thrombin:thrombomodulin complex; reduces binding to heparin and pro-inflammatory activities. In terms of processing, forms covalent cross-links mediated by transglutaminase TGM2, between a glutamine and the epsilon-amino group of a lysine residue, forming homopolymers and heteropolymers. As to expression, serum levels are found elevated in mice with modeled systemic lupus erythematosus (SLE) and are correlated with SLE disease activity.

It is found in the nucleus. The protein resides in the cytoplasm. It localises to the chromosome. The protein localises to the cell membrane. Its subcellular location is the endosome. It is found in the endoplasmic reticulum-Golgi intermediate compartment. The protein resides in the secreted. Multifunctional redox sensitive protein with various roles in different cellular compartments. In the nucleus is one of the major chromatin-associated non-histone proteins and acts as a DNA chaperone involved in replication, transcription, chromatin remodeling, V(D)J recombination, DNA repair and genome stability. Proposed to be an universal biosensor for nucleic acids. Promotes host inflammatory response to sterile and infectious signals and is involved in the coordination and integration of innate and adaptive immune responses. In the cytoplasm functions as a sensor and/or chaperone for immunogenic nucleic acids implicating the activation of TLR9-mediated immune responses, and mediates autophagy. Acts as a danger associated molecular pattern (DAMP) molecule that amplifies immune responses during tissue injury. Released to the extracellular environment can bind DNA, nucleosomes, IL-1 beta, CXCL12, AGER isoform 2/sRAGE, lipopolysaccharide (LPS) and lipoteichoic acid (LTA), and activates cells through engagement of multiple surface receptors. In the extracellular compartment fully reduced HMGB1 (released by necrosis) acts as a chemokine, disulfide HMGB1 (actively secreted) as a cytokine, and sulfonyl HMGB1 (released from apoptotic cells) promotes immunological tolerance. Has proangiogenic activity. May be involved in platelet activation. Binds to phosphatidylserine and phosphatidylethanolamide. Bound to RAGE mediates signaling for neuronal outgrowth. May play a role in accumulation of expanded polyglutamine (polyQ) proteins. Functionally, nuclear functions are attributed to fully reduced HGMB1. Associates with chromatin and binds DNA with a preference to non-canonical DNA structures such as single-stranded DNA, DNA-containing cruciforms or bent structures, supercoiled DNA and ZDNA. Can bent DNA and enhance DNA flexibility by looping thus providing a mechanism to promote activities on various gene promoters by enhancing transcription factor binding and/or bringing distant regulatory sequences into close proximity. May be involved in nucleotide excision repair (NER), mismatch repair (MMR) and base excision repair (BER) pathways, and double strand break repair such as non-homologous end joining (NHEJ). Involved in V(D)J recombination by acting as a cofactor of the RAG complex: acts by stimulating cleavage and RAG protein binding at the 23 bp spacer of conserved recombination signal sequences (RSS). In vitro can displace histone H1 from highly bent DNA. Can restructure the canonical nucleosome leading to relaxation of structural constraints for transcription factor-binding. Enhances binding of sterol regulatory element-binding proteins (SREBPs) such as SREBF1 to their cognate DNA sequences and increases their transcriptional activities. Facilitates binding of TP53 to DNA. Proposed to be involved in mitochondrial quality control and autophagy in a transcription-dependent fashion implicating HSPB1; however, this function has been questioned. Can modulate the activity of the telomerase complex and may be involved in telomere maintenance. In terms of biological role, in the cytoplasm proposed to dissociate the BECN1:BCL2 complex via competitive interaction with BECN1 leading to autophagy activation. Can protect BECN1 and ATG5 from calpain-mediated cleavage and thus proposed to control their proautophagic and proapoptotic functions and to regulate the extent and severity of inflammation-associated cellular injury. In myeloid cells has a protective role against endotoxemia and bacterial infection by promoting autophagy. Involved in endosomal translocation and activation of TLR9 in response to CpG-DNA in macrophages. Its function is as follows. In the extracellular compartment (following either active secretion or passive release) involved in regulation of the inflammatory response. Fully reduced HGMB1 (which subsequently gets oxidized after release) in association with CXCL12 mediates the recruitment of inflammatory cells during the initial phase of tissue injury; the CXCL12:HMGB1 complex triggers CXCR4 homodimerization. Induces the migration of monocyte-derived immature dendritic cells and seems to regulate adhesive and migratory functions of neutrophils implicating AGER/RAGE and ITGAM. Can bind to various types of DNA and RNA including microbial unmethylated CpG-DNA to enhance the innate immune response to nucleic acids. Proposed to act in promiscuous DNA/RNA sensing which cooperates with subsequent discriminative sensing by specific pattern recognition receptors. Promotes extracellular DNA-induced AIM2 inflammasome activation implicating AGER/RAGE. Disulfide HMGB1 binds to transmembrane receptors, such as AGER/RAGE, TLR2, TLR4 and probably TREM1, thus activating their signal transduction pathways. Mediates the release of cytokines/chemokines such as TNF, IL-1, IL-6, IL-8, CCL2, CCL3, CCL4 and CXCL10. Promotes secretion of interferon-gamma by macrophage-stimulated natural killer (NK) cells in concert with other cytokines like IL-2 or IL-12. TLR4 is proposed to be the primary receptor promoting macrophage activation and signaling through TLR4 seems to implicate LY96/MD-2. In bacterial LPS- or LTA-mediated inflammatory responses binds to the endotoxins and transfers them to CD14 for signaling to the respective TLR4:LY96 and TLR2 complexes. Contributes to tumor proliferation by association with ACER/RAGE. Can bind to IL1-beta and signals through the IL1R1:IL1RAP receptor complex. Binding to class A CpG activates cytokine production in plasmacytoid dendritic cells implicating TLR9, MYD88 and AGER/RAGE and can activate autoreactive B cells. Via HMGB1-containing chromatin immune complexes may also promote B cell responses to endogenous TLR9 ligands through a B-cell receptor (BCR)-dependent and ACER/RAGE-independent mechanism. Inhibits phagocytosis of apoptotic cells by macrophages; the function is dependent on poly-ADP-ribosylation and involves binding to phosphatidylserine on the cell surface of apoptotic cells. In adaptive immunity may be involved in enhancing immunity through activation of effector T-cells and suppression of regulatory T (TReg) cells. In contrast, without implicating effector or regulatory T-cells, required for tumor infiltration and activation of T-cells expressing the lymphotoxin LTA:LTB heterotrimer thus promoting tumor malignant progression. Also reported to limit proliferation of T-cells. Released HMGB1:nucleosome complexes formed during apoptosis can signal through TLR2 to induce cytokine production. Involved in induction of immunological tolerance by apoptotic cells; its pro-inflammatory activities when released by apoptotic cells are neutralized by reactive oxygen species (ROS)-dependent oxidation specifically on Cys-106. During macrophage activation by activated lymphocyte-derived self apoptotic DNA (ALD-DNA) promotes recruitment of ALD-DNA to endosomes. The polypeptide is High mobility group protein B1 (Hmgb1) (Mus musculus (Mouse)).